The primary structure comprises 129 residues: MAKEPQRVRRRERKNIVSGVAHVNASFNNTMITITDAQGNTISWSSAGAMGFKGSRKSTPYAAQVAAEDAGRKAAEHGMRTLEVEVSGPGSGRESALRALQAAGFTVTSIRDVTSIPHNGCRPRKRRRV.

This sequence belongs to the universal ribosomal protein uS11 family. In terms of assembly, part of the 30S ribosomal subunit. Interacts with proteins S7 and S18. Binds to IF-3.

Located on the platform of the 30S subunit, it bridges several disparate RNA helices of the 16S rRNA. Forms part of the Shine-Dalgarno cleft in the 70S ribosome. In Methylobacterium radiotolerans (strain ATCC 27329 / DSM 1819 / JCM 2831 / NBRC 15690 / NCIMB 10815 / 0-1), this protein is Small ribosomal subunit protein uS11.